A 393-amino-acid polypeptide reads, in one-letter code: Phosphoglycerate kinase (393 aa).

Residues 21 to 23 (DLN), R36, 59 to 62 (HLGR), R114, and R147 each bind substrate. ATP-binding positions include K198, E314, and 340 to 343 (GGDT).

Belongs to the phosphoglycerate kinase family. Monomer.

It is found in the cytoplasm. The catalysed reaction is (2R)-3-phosphoglycerate + ATP = (2R)-3-phospho-glyceroyl phosphate + ADP. The protein operates within carbohydrate degradation; glycolysis; pyruvate from D-glyceraldehyde 3-phosphate: step 2/5. This chain is Phosphoglycerate kinase, found in Buchnera aphidicola subsp. Baizongia pistaciae (strain Bp).